A 112-amino-acid chain; its full sequence is Elongin-C (112 aa).

The protein belongs to the SKP1 family. In terms of assembly, heterotrimer of an A (ELOA, ELOA2 or ELOA3P), ELOB and ELOC subunit. The elongin BC complex interacts with EPOP; leading to recruit the elongin BC complex to Polycomb group (PcG) target genes, thereby restricting excessive activity of the PRC2/EED-EZH2 complex. Component of multiple cullin-RING E3 ubiquitin-protein ligase complexes composed of Elongin BC (ELOB and ELOC), a cullin (CUL2 or CUL5), a catalytic subunit (RBX1 or RNF7/RBX2), as well as a substrate adapter protein that can be either ASB2, ASB9, ASB11, KLHDC2, KLHDC3, KLHDC10, APPBP2, FEM1A, FEM1B, FEM1C, LRR1, PCMTD1, SOCS1, SOCS2, SOCS5, SPSB1, SPSB3, ELOA, VHL, WSB1, ZYG11B or RAB40C. Interacts with TMF1. As part of the Elongin BC E3 ubiquitin ligase complex; interacts with NRBP1. May form oligomers as a KLHDC2/KLHDC3-ELOB-ELOC complex; this interaction is autoinhibitory for the E3 ligase complex as the substrate-binding site of KLHDC2/KLHDC3 is blocked in the oligomer. In terms of processing, ubiquitinated by the DCX(AMBRA1) complex, leading to its degradation by the proteasome.

The protein localises to the nucleus. The protein operates within protein modification; protein ubiquitination. In terms of biological role, SIII, also known as elongin, is a general transcription elongation factor that increases the RNA polymerase II transcription elongation past template-encoded arresting sites. Subunit A is transcriptionally active and its transcription activity is strongly enhanced by binding to the dimeric complex of the SIII regulatory subunits B and C (elongin BC complex). In embryonic stem cells, the elongin BC complex is recruited by EPOP to Polycomb group (PcG) target genes in order generate genomic region that display both active and repressive chromatin properties, an important feature of pluripotent stem cells. Its function is as follows. Core component of multiple cullin-RING-based ECS (ElonginB/C-CUL2/5-SOCS-box protein) E3 ubiquitin-protein ligase complexes, which mediate the ubiquitination of target proteins. By binding to BC-box motifs it seems to link target recruitment subunits, like VHL and members of the SOCS box family, to Cullin/RBX1 modules that activate E2 ubiquitination enzymes. Component the von Hippel-Lindau ubiquitination complex CBC(VHL). A number of ECS complexes (containing either KLHDC2, KLHDC3, KLHDC10, APPBP2, FEM1A, FEM1B or FEM1C as substrate-recognition component) are part of the DesCEND (destruction via C-end degrons) pathway, which recognizes a C-degron located at the extreme C terminus of target proteins, leading to their ubiquitination and degradation. The ECS(ASB9) complex mediates ubiquitination and degradation of CKB. As part of a multisubunit ubiquitin ligase complex, polyubiquitinates monoubiquitinated POLR2A. ECS(LRR1) ubiquitinates MCM7 and promotes CMG replisome disassembly by VCP and chromatin extraction during S-phase. As part of the ECS(RAB40C) complex, mediates ANKRD28 ubiquitination and degradation, thereby inhibiting protein phosphatase 6 (PP6) complex activity and focal adhesion assembly during cell migration. This Bos taurus (Bovine) protein is Elongin-C (ELOC).